The following is a 397-amino-acid chain: 3-hydroxy-3-methylglutaryl-coenzyme A reductase (397 aa).

Catalysis depends on charge relay system residues Glu-96 and Asp-301. His-391 functions as the Proton donor in the catalytic mechanism.

The protein belongs to the HMG-CoA reductase family.

It catalyses the reaction (R)-mevalonate + 2 NADP(+) + CoA = (3S)-3-hydroxy-3-methylglutaryl-CoA + 2 NADPH + 2 H(+). Its pathway is metabolic intermediate biosynthesis; (R)-mevalonate biosynthesis; (R)-mevalonate from acetyl-CoA: step 3/3. Its function is as follows. Converts HMG-CoA to mevalonate. The chain is 3-hydroxy-3-methylglutaryl-coenzyme A reductase (hmgA) from Methanothermobacter thermautotrophicus (strain ATCC 29096 / DSM 1053 / JCM 10044 / NBRC 100330 / Delta H) (Methanobacterium thermoautotrophicum).